We begin with the raw amino-acid sequence, 485 residues long: Glycogen synthase (485 aa).

Lys-20 lines the ADP-alpha-D-glucose pocket.

This sequence belongs to the glycosyltransferase 1 family. Bacterial/plant glycogen synthase subfamily.

The catalysed reaction is [(1-&gt;4)-alpha-D-glucosyl](n) + ADP-alpha-D-glucose = [(1-&gt;4)-alpha-D-glucosyl](n+1) + ADP + H(+). It participates in glycan biosynthesis; glycogen biosynthesis. Its function is as follows. Synthesizes alpha-1,4-glucan chains using ADP-glucose. This chain is Glycogen synthase, found in Vibrio vulnificus (strain YJ016).